The following is an 80-amino-acid chain: MARRLILGYQSYLSPLKMGPTCRFEPTCSNYALIAISRHGLIKGSVLALGRLARCGPWHPGGWDPVPPRRPLCSWGGRRR.

Belongs to the UPF0161 family.

Its subcellular location is the cell membrane. Functionally, could be involved in insertion of integral membrane proteins into the membrane. The protein is Putative membrane protein insertion efficiency factor of Corynebacterium jeikeium (strain K411).